Reading from the N-terminus, the 74-residue chain is Sec-independent protein translocase protein TatA (74 aa).

A helical transmembrane segment spans residues 1–21 (MGSMSWIHWVIVLGIVALLFG). Residues 51-74 (EVADNKAKSALPRTEAEAEELRKS) are disordered. Positions 64–74 (TEAEAEELRKS) are enriched in basic and acidic residues.

The protein belongs to the TatA/E family. As to quaternary structure, the Tat system comprises two distinct complexes: a TatABC complex, containing multiple copies of TatA, TatB and TatC subunits, and a separate TatA complex, containing only TatA subunits. Substrates initially bind to the TatABC complex, which probably triggers association of the separate TatA complex to form the active translocon.

Its subcellular location is the cell inner membrane. In terms of biological role, part of the twin-arginine translocation (Tat) system that transports large folded proteins containing a characteristic twin-arginine motif in their signal peptide across membranes. TatA could form the protein-conducting channel of the Tat system. The polypeptide is Sec-independent protein translocase protein TatA (Caulobacter vibrioides (strain ATCC 19089 / CIP 103742 / CB 15) (Caulobacter crescentus)).